The primary structure comprises 570 residues: Rqc2 homolog RqcH (570 aa).

The interval 1–173 (MSFDGMFTYG…LPPAQDKISP (173 aa)) is NFACT-N domain. A hhH domain region spans residues 179 to 281 (DDILRHLSFQ…ELLDRFYFGK (103 aa)). Coiled coils occupy residues 279-336 (FGKA…TANL) and 368-430 (TPSE…VEGK). The tract at residues 282–434 (AERDRVKQQA…ELVEGKYLRP (153 aa)) is coiled-coil-M (CCM). Residues 446–570 (HNPVLETYES…ADTVIKLKKS (125 aa)) form an NFACT-R region.

The protein belongs to the NEMF family. As to quaternary structure, associates with isolated or stalled 50S ribosomal subunits. Binds to RqcP. Interacts with ribosomal protein uL11. Displaced from the 50S subunit by thiostrepton. In crystallized 50S subunits RqcH is variously associated with A/P-site tRNA, P-site tRNA and RqcP, an E-site tRNA or A- and P-site tRNAs and RqcP2(YlmH).

Key component of the ribosome quality control system (RQC), a ribosome-associated complex that mediates the extraction of incompletely synthesized nascent chains from stalled ribosomes and their subsequent degradation. RqcH recruits Ala-charged tRNA, and with RqcP directs the elongation of stalled nascent chains on 50S ribosomal subunits, leading to non-templated C-terminal alanine extensions (Ala tail). The Ala tail promotes nascent chain degradation. RqcH, RqcP and charged tRNA(Ala) are necessary and sufficient to add an Ala tail to a model stalled nascent peptide; does not add Val. Binds the P-site tRNA in 50S ribosomal subunit, unwinds the anticodon stem and interacts with the splayed anticodon. Selectively binds tRNA(Ala) isoacceptors, even in the absence of the 50S ribosomal subunit. Adds between 1 and at least 8 Ala residues to the nascent chain; detection of the Ala tail requires either deletion of clpP or its inhibition. Binds to 50S ribosomal subunits, at least 30% of which contain a P-site tRNA and thus are obstructed. The polypeptide is Rqc2 homolog RqcH (Bacillus subtilis (strain 168)).